A 536-amino-acid polypeptide reads, in one-letter code: Transcription factor cheR (536 aa).

A DNA-binding region (zn(2)-C6 fungal-type) is located at residues 19 to 57; that stretch reads CDRCHRHKLRCERSSVIVNGGVAVPLGPCKRCLKACIPC. 2 disordered regions span residues 70–122 and 220–243; these read AKTG…LSGT and ALTDVEKASTGSSKSAPERGPREE. A compositionally biased stretch (low complexity) spans 88–108; that stretch reads AASPAKRAPSPARRPTASTPR.

It is found in the nucleus. Functionally, transcription factor; part of the gene cluster that mediates the biosynthesis of chaetoglobosin A which has a unique inhibitory activity against actin polymerization in mammalian cells. Chaetoglobosin A and its intermediates are involved in the morphological differentiation of C.globosum. Binds directly to asymmetric direct repeats present in the promoters of the chaetoglobosin A cluster genes. The polypeptide is Transcription factor cheR (Chaetomium globosum (strain ATCC 6205 / CBS 148.51 / DSM 1962 / NBRC 6347 / NRRL 1970) (Soil fungus)).